A 35-amino-acid chain; its full sequence is Water stress-responsive protein 7 (35 aa).

This chain is Water stress-responsive protein 7, found in Pinus pinaster (Maritime pine).